We begin with the raw amino-acid sequence, 335 residues long: Photosystem II assembly lipoprotein Ycf48 (335 aa).

Residues 1–23 form the signal peptide; sequence MSRLFSNLFNLLLIAAIGFGLSG. The N-palmitoyl cysteine moiety is linked to residue Cys-24. Cys-24 carries the S-diacylglycerol cysteine lipid modification.

The protein belongs to the Ycf48 family. In terms of assembly, part of early PSII assembly complexes which includes D1 (psbA) and PsbI; not found in mature PSII. Binds to the lumenal side of PSII complexes. Interacts with YidC.

It is found in the cellular thylakoid membrane. A factor required for optimal assembly of photosystem II (PSII), acting in the early stages of PSII assembly. Also plays a role in replacement of photodamaged D1 (psbA). Assists YidC in synthesis of chlorophyll-binding proteins. The chain is Photosystem II assembly lipoprotein Ycf48 from Prochlorococcus marinus (strain MIT 9313).